We begin with the raw amino-acid sequence, 133 residues long: Fluoride-specific ion channel FluC (133 aa).

4 consecutive transmembrane segments (helical) span residues 12–32 (LAMT…ASLI), 41–61 (WGTL…LVWL), 76–96 (IVGV…CLVF), and 104–124 (MIGI…VAGA). Na(+)-binding residues include Gly81 and Thr84.

The protein belongs to the fluoride channel Fluc/FEX (TC 1.A.43) family.

It is found in the cell inner membrane. The enzyme catalyses fluoride(in) = fluoride(out). Na(+) is not transported, but it plays an essential structural role and its presence is essential for fluoride channel function. Its function is as follows. Fluoride-specific ion channel. Important for reducing fluoride concentration in the cell, thus reducing its toxicity. This is Fluoride-specific ion channel FluC from Xanthomonas euvesicatoria pv. vesicatoria (strain 85-10) (Xanthomonas campestris pv. vesicatoria).